We begin with the raw amino-acid sequence, 818 residues long: H(+)/Cl(-) exchange transporter 3 (818 aa).

The Cytoplasmic segment spans residues 1–125 (MESEQLFHRG…WEMTKSLYDA (125 aa)). Short sequence motifs (di-leucine internalization motif; mediates targeting to late endosome and lysosome membranes) lie at residues 28 to 29 (LL), 46 to 47 (LL), and 71 to 75 (LLDLL). The helical transmembrane segment at 126–163 (WSGWLVVTLTGLASGALAGLIDIAADWMTDLKEGICLS) threads the bilayer. N-linked (GlcNAc...) asparagine glycosylation occurs at N177. A helical membrane pass occupies residues 209–232 (MNYIMYIFWALSFAFLAVSLVKVF). The Selectivity filter part_1 signature appears at 238–242 (GSGIP). Residue S239 coordinates chloride. An intramembrane region (helical) is located at residues 241-248 (IPEIKTIL). Helical transmembrane passes span 258–276 (GKWTLMIKTITLVLAVASG) and 282–301 (EGPLVHVACCCGNIFSYLFP). Residues 280–284 (GKEGP) carry the Selectivity filter part_2 motif. Intramembrane regions (helical) lie at residues 313 to 325 (VLSAASAAGVSVA) and 329 to 337 (PIGGVLFSL). A run of 3 helical transmembrane segments spans residues 349 to 367 (LWRSFFAALVAAFVLRSIN), 391 to 416 (FPFILLGVFGGLWGAFFIRANIAWCR), and 423 to 443 (FGKYPVLEVIIVAAITAVIAF). 2 N-linked (GlcNAc...) asparagine glycosylation sites follow: N451 and N479. 2 consecutive transmembrane segments (helical) span residues 500–520 (IWQLCLALIFKIIMTVFTFGI) and 525–544 (GLFIPSMAIGAIAGRIVGIA). Residues 525–529 (GLFIP) carry the Selectivity filter part_3 motif. F527 contacts chloride. 2 intramembrane regions (helical) span residues 572–586 (GLYAMVGAAACLGGV) and 590–601 (TVSLVVIVFELT). An intramembrane region (note=Loop between two helices) is located at residues 602–605 (GGLE). The helical transmembrane segment at 606 to 624 (YIVPLMAAVMTSKWVGDAF) threads the bilayer. The Cytoplasmic segment spans residues 625–818 (GREGIYEAHI…NQDPASIMFN (194 aa)). A chloride-binding site is contributed by Y630. 2 CBS domains span residues 658–722 (MRPR…ARKK) and 755–812 (LDMS…NQDP). Residues 689 to 691 (YNG) and 796 to 799 (TKKD) each bind ATP.

Belongs to the chloride channel (TC 2.A.49) family. ClC-3/CLCN3 subfamily. As to quaternary structure, monomer and homodimer. Forms heterodimers with CLCN4. N-glycosylated. Abundant in brain, especially in the olfactory bulb, hippocampus, and cerebellum. A moderate expression is seen in the lung, kidney and adrenal gland.

Its subcellular location is the lysosome membrane. The protein localises to the late endosome membrane. It localises to the cell membrane. It is found in the early endosome membrane. Functionally, strongly outwardly rectifying, electrogenic H(+)/Cl(-)exchanger which mediates the exchange of chloride ions against protons. The CLC channel family contains both chloride channels and proton-coupled anion transporters that exchange chloride or another anion for protons. The presence of conserved gating glutamate residues is typical for family members that function as antiporters. In terms of biological role, strongly outwardly rectifying, electrogenic H(+)/Cl(-)exchanger which mediates the exchange of chloride ions against protons. May play an important role in neuronal cell function through regulation of membrane excitability by protein kinase C. It could help neuronal cells to establish short-term memory. The sequence is that of H(+)/Cl(-) exchange transporter 3 (Clcn3) from Rattus norvegicus (Rat).